A 232-amino-acid chain; its full sequence is Large ribosomal subunit protein uL1 (232 aa).

This sequence belongs to the universal ribosomal protein uL1 family. Part of the 50S ribosomal subunit.

In terms of biological role, binds directly to 23S rRNA. The L1 stalk is quite mobile in the ribosome, and is involved in E site tRNA release. Functionally, protein L1 is also a translational repressor protein, it controls the translation of the L11 operon by binding to its mRNA. This chain is Large ribosomal subunit protein uL1, found in Bartonella quintana (strain Toulouse) (Rochalimaea quintana).